We begin with the raw amino-acid sequence, 39 residues long: Histone H2A (39 aa).

Basic residues predominate over residues 1–18; the sequence is AGRGKQGGKVRAKAKTRS. The interval 1 to 24 is disordered; the sequence is AGRGKQGGKVRAKAKTRSSRAGLQ. N6-(2-hydroxyisobutyryl)lysine is present on lysine 5. Lysine 5 carries the N6-acetyllysine modification. Lysine 9 is subject to N6-(2-hydroxyisobutyryl)lysine; alternate. Position 9 is an N6-lactoyllysine; alternate (lysine 9). Residue lysine 9 is modified to N6-succinyllysine. Glycyl lysine isopeptide (Lys-Gly) (interchain with G-Cter in ubiquitin) cross-links involve residues lysine 13 and lysine 15. Lysine 36 bears the N6-(2-hydroxyisobutyryl)lysine; alternate mark.

Belongs to the histone H2A family. As to quaternary structure, the nucleosome is a histone octamer containing two molecules each of H2A, H2B, H3 and H4 assembled in one H3-H4 heterotetramer and two H2A-H2B heterodimers. The octamer wraps approximately 147 bp of DNA. In terms of processing, monoubiquitination of C-terminus gives a specific tag for epigenetic transcriptional repression. Following DNA double-strand breaks (DSBs), it is ubiquitinated through 'Lys-63' linkage of ubiquitin moieties.

Its subcellular location is the nucleus. It is found in the chromosome. Its function is as follows. Core component of nucleosome. Nucleosomes wrap and compact DNA into chromatin, limiting DNA accessibility to the cellular machineries which require DNA as a template. Histones thereby play a central role in transcription regulation, DNA repair, DNA replication and chromosomal stability. DNA accessibility is regulated via a complex set of post-translational modifications of histones, also called histone code, and nucleosome remodeling. Functionally, buforins are strong antimicrobial activities in vitro against a broad-spectrum of microorganisms including fungi. Buforin II is more potent than buforin I. This is Histone H2A from Bufo gargarizans (Asian toad).